The following is a 124-amino-acid chain: MIIGLGIDITELDRIKRSLDKYGERFAEKILTPAEIELIPAKNPVPYVAARFAAKEAAVKALGTGFAEGITFHTIEITRLDSGAPQLNFLGKALERSKSMGVEGIHISITHGRDTAAAVVVLEK.

Positions 8 and 56 each coordinate Mg(2+).

Belongs to the P-Pant transferase superfamily. AcpS family. Mg(2+) is required as a cofactor.

Its subcellular location is the cytoplasm. The enzyme catalyses apo-[ACP] + CoA = holo-[ACP] + adenosine 3',5'-bisphosphate + H(+). Its function is as follows. Transfers the 4'-phosphopantetheine moiety from coenzyme A to a Ser of acyl-carrier-protein. The protein is Holo-[acyl-carrier-protein] synthase of Maridesulfovibrio salexigens (strain ATCC 14822 / DSM 2638 / NCIMB 8403 / VKM B-1763) (Desulfovibrio salexigens).